We begin with the raw amino-acid sequence, 580 residues long: Long-chain-fatty-acid--AMP ligase FadD28 (580 aa).

Positions 421–440 (SERTFGGKIVTPSPGTPEGP) are disordered.

This sequence belongs to the ATP-dependent AMP-binding enzyme family.

It carries out the reaction holo-[mycocerosate synthase] + a long-chain fatty acid + ATP = a long-chain fatty acyl-[mycocerosate synthase] + AMP + diphosphate. It catalyses the reaction a long-chain fatty acid + ATP + H(+) = a long-chain fatty acyl-AMP + diphosphate. The catalysed reaction is holo-[mycocerosate synthase] + a long-chain fatty acyl-AMP = a long-chain fatty acyl-[mycocerosate synthase] + AMP + H(+). It participates in lipid metabolism; fatty acid biosynthesis. Involved in the biosynthesis of phthiocerol dimycocerosate (PDIM), a cell wall-associated lipid found only in pathogenic mycobacteria. Catalyzes the activation of long-chain fatty acids as acyl-adenylates (acyl-AMP), which are then transferred to the multifunctional polyketide synthase Mas for further chain extension. This Mycobacterium bovis (strain ATCC BAA-935 / AF2122/97) protein is Long-chain-fatty-acid--AMP ligase FadD28 (fadD28).